The primary structure comprises 493 residues: E3 ubiquitin-protein ligase TRIM35 (493 aa).

Met1 is subject to N-acetylmethionine. Phosphoserine occurs at positions 4 and 8. An RING-type zinc finger spans residues 21 to 61 (CAVCYDPFRDAVTLRCGHNFCRGCVSRCWEVQVSPTCPVCK). Residues 96 to 137 (RFSRVCRLHRGQLSLFCLEDKELLCCSCQADPRHQGHRVQPV) form a B box-type zinc finger. Residues Cys101, His104, Cys123, and His129 each coordinate Zn(2+). Residues 210-251 (AEETRQKQLLADEKMKQLTEETEVLAHEIERLQMEMKEDDVS) are a coiled coil. Positions 284–487 (LGSLQYRVWK…LRICPLHISV (204 aa)) constitute a B30.2/SPRY domain.

It belongs to the TRIM/RBCC family. In terms of assembly, interacts with PKM isoform M2, but not isoform M1; this interaction may compete with that between PKM and FGFR1, and hence reduces FGFR1-dependent tyrosine phosphorylation of PKM. Interacts with IRF7; this interaction promotes IRF7 proteasomal degradation. Interacts with TRAF3; this interaction promotes TRAF3 activation.

Its subcellular location is the cytoplasm. It localises to the nucleus. It carries out the reaction S-ubiquitinyl-[E2 ubiquitin-conjugating enzyme]-L-cysteine + [acceptor protein]-L-lysine = [E2 ubiquitin-conjugating enzyme]-L-cysteine + N(6)-ubiquitinyl-[acceptor protein]-L-lysine.. The protein operates within protein modification; protein ubiquitination. E3 ubiquitin-protein ligase that participates in multiple biological processes including cell death, glucose metabolism, and in particular, the innate immune response. Mediates 'Lys-63'-linked polyubiquitination of TRAF3 thereby promoting type I interferon production via RIG-I signaling pathway. Can also catalyze 'Lys-48'-linked polyubiquitination and proteasomal degradation of viral proteins such as influenza virus PB2. Acts as a negative feedback regulator of TLR7- and TLR9-triggered signaling. Mechanistically, promotes the 'Lys-48'-linked ubiquitination of IRF7 and induces its degradation via a proteasome-dependent pathway. Reduces FGFR1-dependent tyrosine phosphorylation of PKM, inhibiting PKM-dependent lactate production, glucose metabolism, and cell growth. The polypeptide is E3 ubiquitin-protein ligase TRIM35 (TRIM35) (Homo sapiens (Human)).